The primary structure comprises 438 residues: Sphingomyelinase phosphodiesterase D (438 aa).

An N-terminal signal peptide occupies residues 1-17 (MKIILILVLVLVVSINA). Zn(2+)-binding residues include D27 and H29. N40 carries an N-linked (GlcNAc...) asparagine glycan. 2 residues coordinate Zn(2+): D111 and N148. N160 is a glycosylation site (N-linked (GlcNAc...) asparagine). H247 contributes to the Zn(2+) binding site. Residue N271 is glycosylated (N-linked (GlcNAc...) asparagine). 2 residues coordinate Zn(2+): H287 and H289. Residues N338 and N359 are each glycosylated (N-linked (GlcNAc...) asparagine).

The protein belongs to the acid sphingomyelinase family. Requires Zn(2+) as cofactor.

The protein resides in the secreted. This Dictyostelium discoideum (Social amoeba) protein is Sphingomyelinase phosphodiesterase D (sgmD).